A 202-amino-acid chain; its full sequence is CASP-like protein 2B2 (202 aa).

At 1-29 (MSYLGVGVSPGNVPVYHGMNLKVIDRRVR) the chain is on the cytoplasmic side. The chain crosses the membrane as a helical span at residues 30 to 50 (LAELVLRCVICALGVLAAVLV). The Extracellular portion of the chain corresponds to 51–72 (GTDTQVKEIFSIQKKARFTDMK). A helical membrane pass occupies residues 73 to 93 (ALVFLVVANGIAAAYSLVQGV). Topologically, residues 94–118 (RCVVGMVKGSVLFSKPLAWVIFSGD) are cytoplasmic. The helical transmembrane segment at 119 to 139 (QMMAYLTLSAVAAAVQSASFA) threads the bilayer. The Extracellular portion of the chain corresponds to 140-164 (KLGQPDLQWMKICNMYGKFCNQVGE). The helical transmembrane segment at 165 to 185 (GIASALLVSVSMVVLSCISSF) threads the bilayer. Over 186–202 (SLFRLYGGNKGKDGARW) the chain is Cytoplasmic.

Belongs to the Casparian strip membrane proteins (CASP) family. In terms of assembly, homodimer and heterodimers.

It is found in the cell membrane. In Populus trichocarpa (Western balsam poplar), this protein is CASP-like protein 2B2.